Reading from the N-terminus, the 356-residue chain is tRNA N6-adenosine threonylcarbamoyltransferase (356 aa).

2 residues coordinate Fe cation: His-115 and His-119. Residues 139–143 (LVSGG), Asp-173, Gly-186, Asp-190, and Asn-291 each bind substrate. A Fe cation-binding site is contributed by Asp-319.

Belongs to the KAE1 / TsaD family. Requires Fe(2+) as cofactor.

It localises to the cytoplasm. The enzyme catalyses L-threonylcarbamoyladenylate + adenosine(37) in tRNA = N(6)-L-threonylcarbamoyladenosine(37) in tRNA + AMP + H(+). In terms of biological role, required for the formation of a threonylcarbamoyl group on adenosine at position 37 (t(6)A37) in tRNAs that read codons beginning with adenine. Is involved in the transfer of the threonylcarbamoyl moiety of threonylcarbamoyl-AMP (TC-AMP) to the N6 group of A37, together with TsaE and TsaB. TsaD likely plays a direct catalytic role in this reaction. The polypeptide is tRNA N6-adenosine threonylcarbamoyltransferase (Arthrobacter sp. (strain FB24)).